The following is a 172-amino-acid chain: MAKVSNYNNNNNNNNNNNNNNNNNNNYNQNSNNNINSNNNDKFNNRLKCLNCCRLGHTKANWWINNNNNNKDNSYNNNKINNIRDEEDVDLNGDDTFNDSNNDNSPSRGSINAIGENQEKLEKQNQMVISEKDCQENTSSKSIFSSNISIYRKGVKFIWNDKLCEYEINDKT.

Disordered stretches follow at residues 1–39 (MAKV…NSNN) and 90–112 (DLNG…GSIN). Over residues 98-110 (NDSNNDNSPSRGS) the composition is skewed to low complexity.

This is an uncharacterized protein from Dictyostelium discoideum (Social amoeba).